A 423-amino-acid polypeptide reads, in one-letter code: MIEVKPSQAQGSVRAPPSKSYSHRALAVSLLCEAPSKIENISRARDVIATINAIKSFGAKLSDNLTEIKIEPPQRPSIPDDVIDCGGSGTTIRFFAPISTLTEGGYTVLTGNDSLRRRPMGPIIDAINKLGGWAISSRMNGLPPLIVRGGGLKGGEVEIDGSISSQFFSGLMIASTRFERGLKIKPIGELVSRPYLEMTKEVLRRSGSHVELNEEIKVEPVPPKGLEFKIPGDYGLAAFHMLTASVTGGKVIVEDLDSTVPQADYAAIDVLRSFGVEVQEVGSRVIVEGRPKRGSKLNLKDSPDIFPIACVLASFVSEISEIRGVAHARVKESDRVANMASELKKVGVEVKELYDGLVIRGGSPKGGVKLDSHGDHRIFMALLALAAATREGCIIEGEDSVADSYPSFLEDSMKLGIDVRYNL.

Residues lysine 19, serine 20, and arginine 24 each coordinate 3-phosphoshikimate. Phosphoenolpyruvate is bound at residue lysine 19. Positions 89 and 118 each coordinate phosphoenolpyruvate. 3-phosphoshikimate contacts are provided by serine 164, serine 165, glutamine 166, serine 192, aspartate 304, and lysine 331. A phosphoenolpyruvate-binding site is contributed by glutamine 166. The active-site Proton acceptor is the aspartate 304. Phosphoenolpyruvate contacts are provided by arginine 335 and arginine 377.

It belongs to the EPSP synthase family. In terms of assembly, monomer.

It localises to the cytoplasm. The catalysed reaction is 3-phosphoshikimate + phosphoenolpyruvate = 5-O-(1-carboxyvinyl)-3-phosphoshikimate + phosphate. It functions in the pathway metabolic intermediate biosynthesis; chorismate biosynthesis. In terms of biological role, catalyzes the transfer of the enolpyruvyl moiety of phosphoenolpyruvate (PEP) to the 5-hydroxyl of shikimate-3-phosphate (S3P) to produce enolpyruvyl shikimate-3-phosphate and inorganic phosphate. The chain is 3-phosphoshikimate 1-carboxyvinyltransferase from Korarchaeum cryptofilum (strain OPF8).